A 118-amino-acid polypeptide reads, in one-letter code: Small ribosomal subunit protein uS13 (118 aa).

The tract at residues 91–118 (HRRSLPLRGQRTKNNARTRKGPKKPIKR) is disordered.

The protein belongs to the universal ribosomal protein uS13 family. As to quaternary structure, part of the 30S ribosomal subunit. Forms a loose heterodimer with protein S19. Forms two bridges to the 50S subunit in the 70S ribosome.

Its function is as follows. Located at the top of the head of the 30S subunit, it contacts several helices of the 16S rRNA. In the 70S ribosome it contacts the 23S rRNA (bridge B1a) and protein L5 of the 50S subunit (bridge B1b), connecting the 2 subunits; these bridges are implicated in subunit movement. Contacts the tRNAs in the A and P-sites. The protein is Small ribosomal subunit protein uS13 of Hydrogenovibrio crunogenus (strain DSM 25203 / XCL-2) (Thiomicrospira crunogena).